The primary structure comprises 1842 residues: Plexin-B2 (1842 aa).

Residues 1–19 (MALPLWALTFLGLTGLGLS) form the signal peptide. In terms of domain architecture, Sema spans 20–468 (LRSRKPESFR…TQDKVFRLPV (449 aa)). At 20–1201 (LRSRKPESFR…EYDTRASDVP (1182 aa)) the chain is on the extracellular side. 2 cysteine pairs are disulfide-bonded: Cys78/Cys87 and Cys112/Cys120. 2 N-linked (GlcNAc...) asparagine glycosylation sites follow: Asn127 and Asn242. 3 disulfides stabilise this stretch: Cys250–Cys366, Cys266–Cys313, and Cys331–Cys353. Residues Asn393 and Asn451 are each glycosylated (N-linked (GlcNAc...) asparagine). Disulfide bonds link Cys471–Cys488, Cys477–Cys520, Cys480–Cys497, Cys491–Cys503, and Cys557–Cys576. An N-linked (GlcNAc...) asparagine glycan is attached at Asn798. IPT/TIG domains follow at residues 806–895 (PVIT…QFTY), 898–982 (PQPL…SFTY), and 986–1095 (PMIR…VFEY). Asn919, Asn1053, and Asn1072 each carry an N-linked (GlcNAc...) asparagine glycan. A helical membrane pass occupies residues 1202-1222 (LSLILPLVMVPMVFIIVVSIY). Residues 1223 to 1842 (CYWRKSQQAE…AALENKVTDL (620 aa)) are Cytoplasmic-facing. A phosphoserine mark is found at Ser1240, Ser1248, and Ser1574.

This sequence belongs to the plexin family. In terms of assembly, monomer, and heterodimer with PLXNB1. Interacts with MET, ARHGEF11 and ARHGEF12. May also interact with MST1R. Detected in macrophages from spleen and bone marrow (at protein level). Detected in granule cells in the developing cerebellum, dentate gyrus and olfactory bulb. Expressed in neurons and glia in the developing hippocampus.

It is found in the cell membrane. Cell surface receptor for SEMA4C, SEMA4D and SEMA4G that plays an important role in cell-cell signaling. Plays a role in glutamatergic synapse development and is required for SEMA4A-mediated excitatory synapse development. Binding to class 4 semaphorins promotes downstream activation of RHOA and phosphorylation of ERBB2 at 'Tyr-1248'. Also acts as a cell surface receptor for angiogenin (ANG); promoting ANG endocytosis and translocation to the cytoplasm or nucleus. Required for normal differentiation and migration of neuronal cells during brain corticogenesis and for normal embryonic brain development. Regulates the migration of cerebellar granule cells in the developing brain. Plays a role in RHOA activation and subsequent changes of the actin cytoskeleton. Plays a role in axon guidance, invasive growth and cell migration. May modulate the activity of RAC1 and CDC42. Down-regulates macrophage migration in wound-healing assays (in vitro). This is Plexin-B2 from Mus musculus (Mouse).